The primary structure comprises 397 residues: Iron-sulfur cluster assembly SufBD family protein Mb1497 (397 aa).

This sequence belongs to the iron-sulfur cluster assembly SufBD family.

The protein is Iron-sulfur cluster assembly SufBD family protein Mb1497 of Mycobacterium bovis (strain ATCC BAA-935 / AF2122/97).